Here is a 370-residue protein sequence, read N- to C-terminus: tRNA/tmRNA (uracil-C(5))-methyltransferase (370 aa).

Residues glutamine 195, tyrosine 221, asparagine 226, glutamate 242, and aspartate 302 each contribute to the S-adenosyl-L-methionine site. Cysteine 327 acts as the Nucleophile in catalysis. The active-site Proton acceptor is the glutamate 361.

The protein belongs to the class I-like SAM-binding methyltransferase superfamily. RNA M5U methyltransferase family. TrmA subfamily.

The catalysed reaction is uridine(54) in tRNA + S-adenosyl-L-methionine = 5-methyluridine(54) in tRNA + S-adenosyl-L-homocysteine + H(+). The enzyme catalyses uridine(341) in tmRNA + S-adenosyl-L-methionine = 5-methyluridine(341) in tmRNA + S-adenosyl-L-homocysteine + H(+). Its function is as follows. Dual-specificity methyltransferase that catalyzes the formation of 5-methyluridine at position 54 (m5U54) in all tRNAs, and that of position 341 (m5U341) in tmRNA (transfer-mRNA). This Wolinella succinogenes (strain ATCC 29543 / DSM 1740 / CCUG 13145 / JCM 31913 / LMG 7466 / NCTC 11488 / FDC 602W) (Vibrio succinogenes) protein is tRNA/tmRNA (uracil-C(5))-methyltransferase.